A 498-amino-acid polypeptide reads, in one-letter code: Serine hydroxymethyltransferase, mitochondrial (498 aa).

An N6-(pyridoxal phosphate)lysine modification is found at Lys-273.

The protein belongs to the SHMT family. As to quaternary structure, homotetramer. Pyridoxal 5'-phosphate is required as a cofactor.

The protein resides in the mitochondrion. The catalysed reaction is (6R)-5,10-methylene-5,6,7,8-tetrahydrofolate + glycine + H2O = (6S)-5,6,7,8-tetrahydrofolate + L-serine. It functions in the pathway one-carbon metabolism; tetrahydrofolate interconversion. Its function is as follows. Interconversion of serine and glycine. This Kluyveromyces lactis (strain ATCC 8585 / CBS 2359 / DSM 70799 / NBRC 1267 / NRRL Y-1140 / WM37) (Yeast) protein is Serine hydroxymethyltransferase, mitochondrial (SHM1).